The following is a 335-amino-acid chain: Beta-ketoacyl-[acyl-carrier-protein] synthase III (335 aa).

Active-site residues include C116 and H256. Residues 257 to 261 are ACP-binding; that stretch reads QANLR. The active site involves N286.

It belongs to the thiolase-like superfamily. FabH family. As to quaternary structure, homodimer.

It localises to the cytoplasm. The catalysed reaction is malonyl-[ACP] + acetyl-CoA + H(+) = 3-oxobutanoyl-[ACP] + CO2 + CoA. Its pathway is lipid metabolism; fatty acid biosynthesis. Catalyzes the condensation reaction of fatty acid synthesis by the addition to an acyl acceptor of two carbons from malonyl-ACP. Catalyzes the first condensation reaction which initiates fatty acid synthesis and may therefore play a role in governing the total rate of fatty acid production. Possesses both acetoacetyl-ACP synthase and acetyl transacylase activities. Its substrate specificity determines the biosynthesis of branched-chain and/or straight-chain of fatty acids. In Porphyromonas gingivalis (strain ATCC BAA-308 / W83), this protein is Beta-ketoacyl-[acyl-carrier-protein] synthase III.